A 198-amino-acid chain; its full sequence is Auxin-binding protein 1 (198 aa).

Positions 1–33 are cleaved as a signal peptide; it reads MIVLSVGSASSSPIVVVFSVALLLFYFSETSLG. Cysteine 36 and cysteine 189 are disulfide-bonded. Residues histidine 92, histidine 94, and glutamate 98 each coordinate Zn(2+). N-linked (GlcNAc...) asparagine glycosylation is present at asparagine 130. Histidine 141 contacts Zn(2+). Residues 195 to 198 carry the Prevents secretion from ER motif; it reads KDEL.

Homodimer. May interact with the GPI-anchored plasma membrane protein SKU5 and its family members. Interacts with TMK1 (via extracellular domain). Post-translationally, glycosylated. Ubiquitinated by RMA2, leading to proteasomal degradation.

The protein localises to the endoplasmic reticulum lumen. Its subcellular location is the cell membrane. Its function is as follows. Auxin receptor that controls cell elongation and cell division. Involved in embryonic morphogenesis. Acts on the cell cycle, endocycle, cell plate formation, and cell expansion and contributes to the control of auxin-related gene expression. Controls root meristem size and mediates auxin responsiveness. Involved in activation of ROP GTPases in response to auxin and regulation of clathrin-mediated endocytosis in roots. Acts as a positive factor in clathrin recruitment to the plasma membrane, thereby promoting endocytosis. Upon auxin binding, restricts the internalization of PIN proteins by inhibiting clathrin-mediated endocytosis. Promotes auxin-triggered phosphorylation status modulation of RAF-like kinases (e.g. RAF20 and RAF24). Involved in the regulation of polar auxin transport. Behaves as a negative regulator of the SCF(TIR1/AFB) signaling pathway, protecting AUX/IAA repressors from degradation. Regulates the expression of cell wall remodeling genes via an SCF(TIR1/AFB)-dependent pathway. Involved in the modulation of hemicellulose xyloglucan structure. Required for rapid auxin-mediated re-orientation of microtubules to regulate cell elongation in roots and dark-grown hypocotyls as well as asymmetric growth during gravitropic responses. Involved in the shade avoidance response. Forms with TMK1 a cell surface auxin perception complex that activates ROP signaling pathways. ABP1 sensing of auxin is important for the ABP1-TMK1 complex formation. Interacts functionally with phytochrome to regulate growth. This chain is Auxin-binding protein 1, found in Arabidopsis thaliana (Mouse-ear cress).